A 185-amino-acid polypeptide reads, in one-letter code: Ribosome-recycling factor (185 aa).

This sequence belongs to the RRF family.

It is found in the cytoplasm. Responsible for the release of ribosomes from messenger RNA at the termination of protein biosynthesis. May increase the efficiency of translation by recycling ribosomes from one round of translation to another. This is Ribosome-recycling factor from Tolumonas auensis (strain DSM 9187 / NBRC 110442 / TA 4).